Here is a 361-residue protein sequence, read N- to C-terminus: 5-formaminoimidazole-4-carboxamide-1-(beta)-D-ribofuranosyl 5'-monophosphate synthetase (361 aa).

Residues H27 and S94 each contribute to the 5-amino-1-(5-phospho-beta-D-ribosyl)imidazole-4-carboxamide site. The region spanning 116 to 348 (RQILRWEAER…MGQRIAKEIK (233 aa)) is the ATP-grasp domain. ATP is bound by residues 146–208 (PDEI…TNYC) and E230. 5-amino-1-(5-phospho-beta-D-ribosyl)imidazole-4-carboxamide is bound at residue N258. Mg(2+) is bound by residues Q297 and E310.

It belongs to the phosphohexose mutase family. It depends on Mg(2+) as a cofactor. The cofactor is Mn(2+).

It catalyses the reaction 5-amino-1-(5-phospho-beta-D-ribosyl)imidazole-4-carboxamide + formate + ATP = 5-formamido-1-(5-phospho-D-ribosyl)imidazole-4-carboxamide + ADP + phosphate. Its pathway is purine metabolism; IMP biosynthesis via de novo pathway; 5-formamido-1-(5-phospho-D-ribosyl)imidazole-4-carboxamide from 5-amino-1-(5-phospho-D-ribosyl)imidazole-4-carboxamide (formate route): step 1/1. Catalyzes the ATP- and formate-dependent formylation of 5-aminoimidazole-4-carboxamide-1-beta-d-ribofuranosyl 5'-monophosphate (AICAR) to 5-formaminoimidazole-4-carboxamide-1-beta-d-ribofuranosyl 5'-monophosphate (FAICAR) in the absence of folates. The polypeptide is 5-formaminoimidazole-4-carboxamide-1-(beta)-D-ribofuranosyl 5'-monophosphate synthetase (Methanococcus aeolicus (strain ATCC BAA-1280 / DSM 17508 / OCM 812 / Nankai-3)).